The chain runs to 367 residues: Polyenoic acids biosynthesis gene cluster protein Ba17b (367 aa).

3 consecutive transmembrane segments (helical) span residues 16-36, 50-70, and 90-110; these read LEVFIAVFTPLTIIAVALRFY, WLIIAALVGQIVAGGIAIGAV, and LVAFFKYLVAMSTWYATTEGL. Asparagine 133 is a glycosylation site (N-linked (GlcNAc...) asparagine). The next 3 helical transmembrane spans lie at 137 to 157, 183 to 203, and 211 to 231; these read LVLVGASVGGGLADLFGCTPF, FPNIVTDVVLLVLPMPIVWGL, and LVLVLTFLFGSIFGELIGGDS. N-linked (GlcNAc...) asparagine glycosylation is present at asparagine 245. A helical transmembrane segment spans residues 259 to 279; it reads LIIWTVCEPGVYLIAACLLVY.

This sequence belongs to the SAT4 family.

It is found in the membrane. Its pathway is secondary metabolite biosynthesis. Its function is as follows. Part of the gene cluster that mediates the biosynthesis of (2Z,4E,6E,10E)-9-hydroxydodeca-2,4,6,10-tetraenoic acid (BAA), (2E,4E,6E,10E)-9-hydroxydodeca-2,4,6,10-tetraenoic acid (BAB), and (2Z,4E,6E)-octa-2,4,6-trienedioic acid (PBA). The highly reducing polyketide synthase Ba17a is sufficent to produce PBA and BAA. The still to be characterized protein Ba17b leads to an increased production of BAA as well as to the production of the new compound BAB. BAA does not possess insecticidal activity against G.mellonella larvae, however, both BAA and BAB increase the growth of Candida albicans and BAA can mitigate the fungicidal effects of fluconazole over C.albicans, suggesting that generalist pathogens such as M.anisopliae, can potentially manipulate the yeast microbiota found in arthropods (and anywhere else) by the activity of compounds as BAA and BAB. In Metarhizium anisopliae (Entomophthora anisopliae), this protein is Polyenoic acids biosynthesis gene cluster protein Ba17b.